Consider the following 480-residue polypeptide: tRNA-2-methylthio-N(6)-dimethylallyladenosine synthase (480 aa).

Positions 25–145 (GVFYVHTLGC…LPQLLDQARI (121 aa)) constitute an MTTase N-terminal domain. Cys34, Cys74, Cys108, Cys182, Cys186, and Cys189 together coordinate [4Fe-4S] cluster. Residues 168–397 (RASKVSSWVA…VALQERITEE (230 aa)) enclose the Radical SAM core domain. Residues 400–470 (KTFEGRDVEV…RHNLIADPNP (71 aa)) form the TRAM domain.

The protein belongs to the methylthiotransferase family. MiaB subfamily. Monomer. [4Fe-4S] cluster serves as cofactor.

The protein localises to the cytoplasm. It catalyses the reaction N(6)-dimethylallyladenosine(37) in tRNA + (sulfur carrier)-SH + AH2 + 2 S-adenosyl-L-methionine = 2-methylsulfanyl-N(6)-dimethylallyladenosine(37) in tRNA + (sulfur carrier)-H + 5'-deoxyadenosine + L-methionine + A + S-adenosyl-L-homocysteine + 2 H(+). Catalyzes the methylthiolation of N6-(dimethylallyl)adenosine (i(6)A), leading to the formation of 2-methylthio-N6-(dimethylallyl)adenosine (ms(2)i(6)A) at position 37 in tRNAs that read codons beginning with uridine. This Bifidobacterium adolescentis (strain ATCC 15703 / DSM 20083 / NCTC 11814 / E194a) protein is tRNA-2-methylthio-N(6)-dimethylallyladenosine synthase.